The chain runs to 235 residues: Large ribosomal subunit protein uL1 (235 aa).

This sequence belongs to the universal ribosomal protein uL1 family. In terms of assembly, part of the 50S ribosomal subunit.

Functionally, binds directly to 23S rRNA. The L1 stalk is quite mobile in the ribosome, and is involved in E site tRNA release. Protein L1 is also a translational repressor protein, it controls the translation of the L11 operon by binding to its mRNA. This is Large ribosomal subunit protein uL1 from Mycobacteroides abscessus (strain ATCC 19977 / DSM 44196 / CCUG 20993 / CIP 104536 / JCM 13569 / NCTC 13031 / TMC 1543 / L948) (Mycobacterium abscessus).